The sequence spans 552 residues: Arginine--tRNA ligase (552 aa).

The 'HIGH' region signature appears at 129–139 (ANPTGPVTLAS).

The protein belongs to the class-I aminoacyl-tRNA synthetase family. In terms of assembly, monomer.

It is found in the cytoplasm. The catalysed reaction is tRNA(Arg) + L-arginine + ATP = L-arginyl-tRNA(Arg) + AMP + diphosphate. This is Arginine--tRNA ligase from Frankia alni (strain DSM 45986 / CECT 9034 / ACN14a).